The sequence spans 117 residues: uncharacterized protein (117 aa).

It belongs to the mimivirus R69 family.

This is an uncharacterized protein from Acanthamoeba polyphaga mimivirus (APMV).